The sequence spans 206 residues: RNA pyrophosphohydrolase (206 aa).

Residues 6 to 150 (GYRPNVGIVI…KRDVYRKVMK (145 aa)) form the Nudix hydrolase domain. The Nudix box motif lies at 38–59 (GGINEGENIETAMYRELYEEVG). Positions 162–191 (KPETVEKPRVERTEKRDFQKRDNQKREFRK) are enriched in basic and acidic residues. A disordered region spans residues 162–206 (KPETVEKPRVERTEKRDFQKRDNQKREFRKSARMWNNSHQKGKAQ).

The protein belongs to the Nudix hydrolase family. RppH subfamily. A divalent metal cation serves as cofactor.

Its function is as follows. Accelerates the degradation of transcripts by removing pyrophosphate from the 5'-end of triphosphorylated RNA, leading to a more labile monophosphorylated state that can stimulate subsequent ribonuclease cleavage. This is RNA pyrophosphohydrolase from Actinobacillus pleuropneumoniae serotype 7 (strain AP76).